A 147-amino-acid chain; its full sequence is Hemoglobin subunit beta (147 aa).

V2 carries the post-translational modification N-acetylvaline. The Globin domain occupies 3–147 (HLTGEEKAAV…VANALAHKYH (145 aa)). T13 carries the post-translational modification Phosphothreonine. Residue S45 is modified to Phosphoserine. K60 is subject to N6-acetyllysine. Residue H64 coordinates heme b. Position 83 is an N6-acetyllysine (K83). Heme b is bound at residue H93. S-nitrosocysteine is present on C94. K145 carries the N6-acetyllysine modification.

It belongs to the globin family. As to quaternary structure, heterotetramer of two alpha chains and two beta chains. As to expression, red blood cells.

Its function is as follows. Involved in oxygen transport from the lung to the various peripheral tissues. This is Hemoglobin subunit beta (HBB) from Ailuropoda melanoleuca (Giant panda).